The primary structure comprises 291 residues: Aspartate carbamoyltransferase catalytic subunit (291 aa).

Residues Arg-47 and Thr-48 each coordinate carbamoyl phosphate. Lys-75 contributes to the L-aspartate binding site. Positions 97, 126, and 129 each coordinate carbamoyl phosphate. Positions 159 and 213 each coordinate L-aspartate. Carbamoyl phosphate is bound by residues Gly-251 and Pro-252.

This sequence belongs to the aspartate/ornithine carbamoyltransferase superfamily. ATCase family. Heterododecamer (2C3:3R2) of six catalytic PyrB chains organized as two trimers (C3), and six regulatory PyrI chains organized as three dimers (R2).

It catalyses the reaction carbamoyl phosphate + L-aspartate = N-carbamoyl-L-aspartate + phosphate + H(+). The protein operates within pyrimidine metabolism; UMP biosynthesis via de novo pathway; (S)-dihydroorotate from bicarbonate: step 2/3. In terms of biological role, catalyzes the condensation of carbamoyl phosphate and aspartate to form carbamoyl aspartate and inorganic phosphate, the committed step in the de novo pyrimidine nucleotide biosynthesis pathway. The polypeptide is Aspartate carbamoyltransferase catalytic subunit (Aquifex aeolicus (strain VF5)).